A 201-amino-acid chain; its full sequence is Cardiotrophin-1 (201 aa).

The protein belongs to the IL-6 superfamily. In terms of tissue distribution, highly expressed in heart, skeletal muscle, prostate and ovary. Lower levels in lung, kidney, pancreas, thymus, testis and small intestine. Little or no expression in brain, placenta, liver, spleen, colon or peripheral blood leukocytes.

It localises to the secreted. In terms of biological role, induces cardiac myocyte hypertrophy in vitro. Binds to and activates the ILST/gp130 receptor. The sequence is that of Cardiotrophin-1 (CTF1) from Homo sapiens (Human).